Consider the following 448-residue polypeptide: Exodeoxyribonuclease 7 large subunit (448 aa).

Belongs to the XseA family. Heterooligomer composed of large and small subunits.

It localises to the cytoplasm. The catalysed reaction is Exonucleolytic cleavage in either 5'- to 3'- or 3'- to 5'-direction to yield nucleoside 5'-phosphates.. In terms of biological role, bidirectionally degrades single-stranded DNA into large acid-insoluble oligonucleotides, which are then degraded further into small acid-soluble oligonucleotides. This Nitrosomonas europaea (strain ATCC 19718 / CIP 103999 / KCTC 2705 / NBRC 14298) protein is Exodeoxyribonuclease 7 large subunit.